The chain runs to 110 residues: Acylphosphatase (110 aa).

In terms of domain architecture, Acylphosphatase-like spans 20 to 108 (RAHIFVRGKV…GEFNDFSILP (89 aa)). Catalysis depends on residues arginine 35 and asparagine 53.

The protein belongs to the acylphosphatase family.

It carries out the reaction an acyl phosphate + H2O = a carboxylate + phosphate + H(+). The protein is Acylphosphatase (acyP) of Pyrobaculum calidifontis (strain DSM 21063 / JCM 11548 / VA1).